The following is a 246-amino-acid chain: UDP-N-acetyl-D-mannosaminuronic acid transferase (246 aa).

This sequence belongs to the glycosyltransferase 26 family.

The enzyme catalyses UDP-N-acetyl-alpha-D-mannosaminouronate + N-acetyl-alpha-D-glucosaminyl-di-trans,octa-cis-undecaprenyl diphosphate = beta-D-ManNAcA-(1-&gt;4)-alpha-D-GlcNAc-di-trans,octa-cis-undecaprenyl diphosphate + UDP + H(+). Its pathway is bacterial outer membrane biogenesis; enterobacterial common antigen biosynthesis. In terms of biological role, catalyzes the synthesis of Und-PP-GlcNAc-ManNAcA (Lipid II), the second lipid-linked intermediate involved in enterobacterial common antigen (ECA) synthesis. The sequence is that of UDP-N-acetyl-D-mannosaminuronic acid transferase from Escherichia coli O1:K1 / APEC.